The sequence spans 686 residues: Chromatin modification-related protein EAF1 (686 aa).

Positions 71 to 97 are disordered; sequence QMKRRQNDHHNQGPPPKVQKSTVDSLK. The HSA domain maps to 202–280; the sequence is FKFIRKSKKK…DKSIIRNLPV (79 aa). The Myb-like domain occupies 354–418; that stretch reads IPTIWLPEDD…FERYIQLNDK (65 aa). Disordered stretches follow at residues 493 to 517, 544 to 617, and 657 to 686; these read RKST…RIPT, ARMV…QQRR, and QQGY…PNNA. A compositionally biased stretch (polar residues) spans 497–506; sequence AELQANQNVT. Residues 554 to 568 are compositionally biased toward pro residues; it reads APAPAPAPPPPPPPK. Positions 574 to 588 are enriched in polar residues; sequence TTPNGTPLTNEQIQH. The span at 599 to 613 shows a compositional bias: low complexity; sequence LQQQQQQQQQQQHQQ. Residues 671–686 are compositionally biased toward polar residues; sequence QKNQTASPMSGSPNNA.

The protein belongs to the EAF1 family. In terms of assembly, component of the NuA4 histone acetyltransferase complex.

It is found in the nucleus. Component of the NuA4 histone acetyltransferase complex which is involved in transcriptional activation of selected genes principally by acetylation of nucleosomal histone H4 and H2A. The NuA4 complex is also involved in DNA repair. In Candida albicans (strain SC5314 / ATCC MYA-2876) (Yeast), this protein is Chromatin modification-related protein EAF1 (VID21).